Here is a 445-residue protein sequence, read N- to C-terminus: Probable glycine dehydrogenase (decarboxylating) subunit 1 (445 aa).

This sequence belongs to the GcvP family. N-terminal subunit subfamily. The glycine cleavage system is composed of four proteins: P, T, L and H. In this organism, the P 'protein' is a heterodimer of two subunits.

It catalyses the reaction N(6)-[(R)-lipoyl]-L-lysyl-[glycine-cleavage complex H protein] + glycine + H(+) = N(6)-[(R)-S(8)-aminomethyldihydrolipoyl]-L-lysyl-[glycine-cleavage complex H protein] + CO2. The glycine cleavage system catalyzes the degradation of glycine. The P protein binds the alpha-amino group of glycine through its pyridoxal phosphate cofactor; CO(2) is released and the remaining methylamine moiety is then transferred to the lipoamide cofactor of the H protein. This is Probable glycine dehydrogenase (decarboxylating) subunit 1 from Chlorobium chlorochromatii (strain CaD3).